Here is a 347-residue protein sequence, read N- to C-terminus: UDP-N-acetylenolpyruvoylglucosamine reductase (347 aa).

Positions 27–197 (LPARAQRLAR…TGIELRLNKM (171 aa)) constitute an FAD-binding PCMH-type domain. R173 is an active-site residue. S247 functions as the Proton donor in the catalytic mechanism. E342 is an active-site residue.

This sequence belongs to the MurB family. The cofactor is FAD.

It is found in the cytoplasm. It carries out the reaction UDP-N-acetyl-alpha-D-muramate + NADP(+) = UDP-N-acetyl-3-O-(1-carboxyvinyl)-alpha-D-glucosamine + NADPH + H(+). Its pathway is cell wall biogenesis; peptidoglycan biosynthesis. In terms of biological role, cell wall formation. The polypeptide is UDP-N-acetylenolpyruvoylglucosamine reductase (Alcanivorax borkumensis (strain ATCC 700651 / DSM 11573 / NCIMB 13689 / SK2)).